The primary structure comprises 271 residues: Tryptophan synthase alpha chain (271 aa).

Residues Glu49 and Asp60 each act as proton acceptor in the active site.

Belongs to the TrpA family. As to quaternary structure, tetramer of two alpha and two beta chains.

It carries out the reaction (1S,2R)-1-C-(indol-3-yl)glycerol 3-phosphate + L-serine = D-glyceraldehyde 3-phosphate + L-tryptophan + H2O. Its pathway is amino-acid biosynthesis; L-tryptophan biosynthesis; L-tryptophan from chorismate: step 5/5. Functionally, the alpha subunit is responsible for the aldol cleavage of indoleglycerol phosphate to indole and glyceraldehyde 3-phosphate. The polypeptide is Tryptophan synthase alpha chain (Burkholderia thailandensis (strain ATCC 700388 / DSM 13276 / CCUG 48851 / CIP 106301 / E264)).